A 555-amino-acid chain; its full sequence is Formate--tetrahydrofolate ligase (555 aa).

Residue 65–72 (TPAGEGKS) participates in ATP binding.

The protein belongs to the formate--tetrahydrofolate ligase family.

The catalysed reaction is (6S)-5,6,7,8-tetrahydrofolate + formate + ATP = (6R)-10-formyltetrahydrofolate + ADP + phosphate. The protein operates within one-carbon metabolism; tetrahydrofolate interconversion. In Staphylococcus aureus (strain NCTC 8325 / PS 47), this protein is Formate--tetrahydrofolate ligase.